Consider the following 222-residue polypeptide: Glutathione-specific gamma-glutamylcyclotransferase 1 (222 aa).

A disordered region spans residues 1–25; that stretch reads MKQESAAQSTPPPSLSPAPSAQPSW. A substrate-binding site is contributed by 35 to 40; it reads IFGYGS. Glutamate 115 acts as the Proton acceptor in catalysis.

This sequence belongs to the gamma-glutamylcyclotransferase family. ChaC subfamily. Interacts with NOTCH1 (via extracellular region).

It localises to the cytoplasm. It is found in the cytosol. Its subcellular location is the golgi apparatus. The protein localises to the trans-Golgi network. It catalyses the reaction glutathione = L-cysteinylglycine + 5-oxo-L-proline. Functionally, catalyzes the cleavage of glutathione into 5-oxo-L-proline and a Cys-Gly dipeptide. Acts specifically on glutathione, but not on other gamma-glutamyl peptides. Glutathione depletion is an important factor for apoptosis initiation and execution. Acts as a pro-apoptotic component of the unfolded protein response pathway by mediating the pro-apoptotic effects of the ATF4-ATF3-DDIT3/CHOP cascade. Negative regulator of Notch signaling pathway involved in embryonic neurogenesis: acts by inhibiting Notch cleavage by furin, maintaining Notch in an immature inactive form, thereby promoting neurogenesis in embryos. The protein is Glutathione-specific gamma-glutamylcyclotransferase 1 of Rattus norvegicus (Rat).